We begin with the raw amino-acid sequence, 985 residues long: Thioredoxin domain-containing protein 11 (985 aa).

The span at 1–11 shows a compositional bias: gly residues; the sequence is MSECGGRGGGS. A disordered region spans residues 1–38; sequence MSECGGRGGGSSSSEDAEDEGGGGGGPAGSDCLSSSPT. Residues 29–38 show a composition bias toward low complexity; the sequence is GSDCLSSSPT. A helical membrane pass occupies residues 65-85; sequence LLCGAVALGCALLLALKFTCS. The region spanning 92–214 is the Thioredoxin 1 domain; the sequence is IPAKPPVSFF…IEKFVRRVMK (123 aa). Intrachain disulfides connect C469-C472 and C719-C722. The 151-residue stretch at 649 to 799 folds into the Thioredoxin 2 domain; that stretch reads LDPKQALMKL…LLRFILHHSD (151 aa). Residues 821–919 are a coiled coil; sequence VLQRGHISHL…ASENLLTENT (99 aa). Position 828 is a phosphoserine (S828). The tract at residues 935–985 is disordered; sequence RDGAESLAAQREVHPKQPEPSATPQLPGSSPPPANVSATLVSERNKENRTD.

It belongs to the protein disulfide isomerase family. In terms of assembly, interacts with the cytoplasmic part of DUOX1 and DUOX2. Interacts with TPO and CYBA. In terms of tissue distribution, widely expressed at low level. Expressed at higher level in thyroid and prostate.

It is found in the endoplasmic reticulum membrane. May act as a redox regulator involved in DUOX proteins folding. The interaction with DUOX1 and DUOX2 suggest that it belongs to a multiprotein complex constituting the thyroid H(2)O(2) generating system. It is however not sufficient to assist DUOX1 and DUOX2 in H(2)O(2) generation. This Homo sapiens (Human) protein is Thioredoxin domain-containing protein 11 (TXNDC11).